A 92-amino-acid polypeptide reads, in one-letter code: Small ribosomal subunit protein uS19 (92 aa).

Belongs to the universal ribosomal protein uS19 family.

Functionally, protein S19 forms a complex with S13 that binds strongly to the 16S ribosomal RNA. This Listeria innocua serovar 6a (strain ATCC BAA-680 / CLIP 11262) protein is Small ribosomal subunit protein uS19.